A 296-amino-acid polypeptide reads, in one-letter code: Chronophin (296 aa).

D25 acts as the Nucleophile in catalysis. 2 residues coordinate Mg(2+): D25 and N27. Catalysis depends on N27, which acts as the Proton donor. Residues 58 to 60 (SNN), H182, and K213 each bind substrate. Residue D238 participates in Mg(2+) binding.

This sequence belongs to the HAD-like hydrolase superfamily. As to quaternary structure, homodimer. The cofactor is Mg(2+). As to expression, detected in brain (at protein level).

The protein resides in the cytoplasm. The protein localises to the cytosol. Its subcellular location is the cytoskeleton. It is found in the cell projection. It localises to the ruffle membrane. The protein resides in the lamellipodium membrane. The protein localises to the cell membrane. It catalyses the reaction pyridoxal 5'-phosphate + H2O = pyridoxal + phosphate. It carries out the reaction pyridoxine 5'-phosphate + H2O = pyridoxine + phosphate. The enzyme catalyses pyridoxamine + phosphate = pyridoxamine 5'-phosphate + H2O. The catalysed reaction is O-phospho-L-seryl-[protein] + H2O = L-seryl-[protein] + phosphate. In terms of biological role, functions as a pyridoxal phosphate (PLP) phosphatase, which also catalyzes the dephosphorylation of pyridoxine 5'-phosphate (PNP) and pyridoxamine 5'-phosphate (PMP), with order of substrate preference PLP &gt; PNP &gt; PMP and therefore plays a role in vitamin B6 metabolism. Also functions as a protein serine phosphatase that specifically dephosphorylates 'Ser-3' in proteins of the actin-depolymerizing factor (ADF)/cofilin family like CFL1 and DSTN. Thereby, regulates cofilin-dependent actin cytoskeleton reorganization, being required for normal progress through mitosis and normal cytokinesis. Does not dephosphorylate phosphothreonines in LIMK1. Does not dephosphorylate peptides containing phosphotyrosine. This chain is Chronophin, found in Bos taurus (Bovine).